Reading from the N-terminus, the 509-residue chain is MTKYVYSKDQSYQKFNVDDELNIRRKKLSKLREKGVAFPNNFRRNSISNQLHKKYAHTSNVELIQLNIEVTIAGRIISQRIMGKASFITIRDAEGCIQLYITSNSLATNLYDENIKQWDLGDILGARGILFRTRTGELSIYCKEIRLLTKSLRPLPDKFHGLNNQETKYRQRYLDLIINENTRKTFKIRSLVISEIRQFMKKNNFMEVETPMMHTIAGGAIAHPFITHHNKLGIDMYLRIAPELYLKKLVIGGFERIFEINRSFRNEGISSYHNPEFTMMEIYMAYADYRDIIILVQNLLRSVTQKILGSNIINYGDYELDFKHPFTQISIKEAILYYLPETRSQNIDDICTAVSIAKSLGIKVKSCWTLHRIHMVIFEEVIEKKIIQPTCVTSYPIEISPLARRNDNNPEFADRFELFIAGREIGNGFSELNDPEDQKERFLKQAYGKKNKINNNNVHIHYDEDYLIALEYGLPPTAGIGIGIDRLIMLLTDSHTIRDVILFPTLRPK.

2 residues coordinate Mg(2+): Glu417 and Glu424.

It belongs to the class-II aminoacyl-tRNA synthetase family. As to quaternary structure, homodimer. Mg(2+) is required as a cofactor.

It is found in the cytoplasm. It carries out the reaction tRNA(Lys) + L-lysine + ATP = L-lysyl-tRNA(Lys) + AMP + diphosphate. In Blochmanniella pennsylvanica (strain BPEN), this protein is Lysine--tRNA ligase.